Reading from the N-terminus, the 427-residue chain is 3-phosphoshikimate 1-carboxyvinyltransferase (427 aa).

Phosphoenolpyruvate is bound at residue K20. Positions 21 and 25 each coordinate 3-phosphoshikimate. Phosphoenolpyruvate contacts are provided by G92 and R120. S166, A167, Q168, D312, and K339 together coordinate 3-phosphoshikimate. Q168 is a phosphoenolpyruvate binding site. D312 serves as the catalytic Proton acceptor. Positions 343 and 385 each coordinate phosphoenolpyruvate.

As to quaternary structure, homotetramer.

The protein resides in the cytoplasm. The catalysed reaction is 3-phosphoshikimate + phosphoenolpyruvate = 5-O-(1-carboxyvinyl)-3-phosphoshikimate + phosphate. It participates in metabolic intermediate biosynthesis; chorismate biosynthesis; chorismate from D-erythrose 4-phosphate and phosphoenolpyruvate: step 6/7. Competitively inhibited by glyphosate. Activated by ammonium, rubidium or potassium ions. Catalyzes the transfer of the enolpyruvyl moiety of phosphoenolpyruvate (PEP) to the 5-hydroxyl of shikimate-3-phosphate (S3P) to produce enolpyruvyl shikimate-3-phosphate and inorganic phosphate. In Streptococcus pneumoniae serotype 4 (strain ATCC BAA-334 / TIGR4), this protein is 3-phosphoshikimate 1-carboxyvinyltransferase.